A 327-amino-acid chain; its full sequence is 1-aminocyclopropane-1-carboxylate oxidase 1 (327 aa).

Residues Pro157–Pro257 form the Fe2OG dioxygenase domain. Fe cation contacts are provided by His181, Asp183, and His238.

It belongs to the iron/ascorbate-dependent oxidoreductase family. Fe cation serves as cofactor.

The enzyme catalyses 1-aminocyclopropane-1-carboxylate + L-ascorbate + O2 = ethene + L-dehydroascorbate + hydrogen cyanide + CO2 + 2 H2O. It functions in the pathway alkene biosynthesis; ethylene biosynthesis via S-adenosyl-L-methionine; ethylene from S-adenosyl-L-methionine: step 2/2. In Doritaenopsis sp. (Moth orchid), this protein is 1-aminocyclopropane-1-carboxylate oxidase 1 (ACO1).